A 263-amino-acid polypeptide reads, in one-letter code: tRNA dimethylallyltransferase (263 aa).

The protein belongs to the IPP transferase family. In terms of assembly, monomer. Requires Mg(2+) as cofactor.

The catalysed reaction is adenosine(37) in tRNA + dimethylallyl diphosphate = N(6)-dimethylallyladenosine(37) in tRNA + diphosphate. Catalyzes the transfer of a dimethylallyl group onto the adenine at position 37 in tRNAs that read codons beginning with uridine, leading to the formation of N6-(dimethylallyl)adenosine (i(6)A). The sequence is that of tRNA dimethylallyltransferase from Leifsonia xyli subsp. xyli (strain CTCB07).